We begin with the raw amino-acid sequence, 984 residues long: Translation initiation factor IF-2 (984 aa).

A disordered region spans residues 32–402; that stretch reads PAKNATSTLT…TQPQRAAKRK (371 aa). Residues 89–123 show a composition bias toward low complexity; it reads PAETEAQASPAQPEAKAAAPAAEAEEAPAAKPAPA. Over residues 126–136 the composition is skewed to basic and acidic residues; the sequence is RKAEARTEAPR. 2 stretches are compositionally biased toward low complexity: residues 154–172 and 187–197; these read APETAAPAQPAPEAQSAAP and AETTESAPAEP. Over residues 198–220 the composition is skewed to basic and acidic residues; sequence AAEKAPAEKRRYEVSMEPEKDSV. Over residues 255–270 the composition is skewed to low complexity; sequence RPDPAAVQAQAAAAAQ. Positions 271 to 283 are enriched in basic and acidic residues; it reads AREERAERPDRGP. Residues 308-334 show a composition bias toward low complexity; the sequence is GRPAPRSGAPRPGGARPAAGFGQPAQA. The region spanning 482–651 is the tr-type G domain; the sequence is PRPPVVTIMG…ALQAEVLELK (170 aa). Residues 491 to 498 form a G1 region; it reads GHVDHGKT. Residue 491–498 coordinates GTP; that stretch reads GHVDHGKT. A G2 region spans residues 516-520; it reads GITQH. The G3 stretch occupies residues 537–540; that stretch reads DTPG. Residues 537–541 and 591–594 contribute to the GTP site; these read DTPGH and NKID. The tract at residues 591-594 is G4; sequence NKID. Positions 627 to 629 are G5; that stretch reads SAK.

Belongs to the TRAFAC class translation factor GTPase superfamily. Classic translation factor GTPase family. IF-2 subfamily.

It localises to the cytoplasm. In terms of biological role, one of the essential components for the initiation of protein synthesis. Protects formylmethionyl-tRNA from spontaneous hydrolysis and promotes its binding to the 30S ribosomal subunits. Also involved in the hydrolysis of GTP during the formation of the 70S ribosomal complex. The protein is Translation initiation factor IF-2 of Oleidesulfovibrio alaskensis (strain ATCC BAA-1058 / DSM 17464 / G20) (Desulfovibrio alaskensis).